We begin with the raw amino-acid sequence, 1341 residues long: DNA-directed RNA polymerase subunit beta (1341 aa).

The protein belongs to the RNA polymerase beta chain family. The RNAP catalytic core consists of 2 alpha, 1 beta, 1 beta' and 1 omega subunit. When a sigma factor is associated with the core the holoenzyme is formed, which can initiate transcription.

It catalyses the reaction RNA(n) + a ribonucleoside 5'-triphosphate = RNA(n+1) + diphosphate. Its function is as follows. DNA-dependent RNA polymerase catalyzes the transcription of DNA into RNA using the four ribonucleoside triphosphates as substrates. The protein is DNA-directed RNA polymerase subunit beta of Vibrio cholerae serotype O1 (strain ATCC 39315 / El Tor Inaba N16961).